The sequence spans 68 residues: Neuronal regeneration-related protein (68 aa).

The tract at residues 21–54 (MEGRLPKGRLPVPKEVNRKKNDETNAASLTPLGS) is disordered. Polar residues predominate over residues 44-54 (TNAASLTPLGS).

Interacts with the latency-associated peptides (LAP) of TGFB1 and TGFB2; the interaction results in a decrease in TGFB autoinduction. Interacts with FLNA. In terms of processing, phosphorylated on Ser-59. Phosphorylation decreases stability and activity.

It is found in the cytoplasm. In terms of biological role, may have roles in neural function and cellular differentiation. Ectopic expression promotes axonal regeneration, induces differentiation of fibroblast into myofibroblast, induces myofibroblast ameboid migration, augments motility of gliomas, and increases retinoic-acid regulation of lipid-droplet biogenesis. Down-regulates the expression of TGFB1 and TGFB2 but not of TGFB3. May play a role in the regulation of alveolar generation. The sequence is that of Neuronal regeneration-related protein (NREP) from Pongo abelii (Sumatran orangutan).